The primary structure comprises 485 residues: Delta(14)-sterol reductase (485 aa).

Helical transmembrane passes span 18-38 (FFGP…VYVF), 77-97 (GLVS…SLIL), 131-151 (LAIL…WTFI), 155-175 (FIQI…FVYV), and 319-339 (SLGP…FYIF). Residues Lys-346, Arg-350, Leu-373, Trp-378, and 385 to 386 (NY) each bind NADP(+). A helical transmembrane segment spans residues 431–451 (AKGWGMLITYFYILYFAILLI). Residues Asp-457, 461–465 (CHRKY), and Tyr-472 contribute to the NADP(+) site.

It belongs to the ERG4/ERG24 family.

Its subcellular location is the membrane. The enzyme catalyses 4,4-dimethyl-5alpha-cholesta-8,24-dien-3beta-ol + NADP(+) = 4,4-dimethyl-5alpha-cholesta-8,14,24-trien-3beta-ol + NADPH + H(+). Its pathway is steroid biosynthesis; zymosterol biosynthesis; zymosterol from lanosterol: step 2/6. Its function is as follows. Reduces the C14=C15 double bond of 4,4-dimethyl-cholesta-8,14,24-trienol to produce 4,4-dimethyl-cholesta-8,24-dienol. This is Delta(14)-sterol reductase from Fusarium vanettenii (Neocosmospora pisi).